We begin with the raw amino-acid sequence, 4650 residues long: Nonribosomal peptide synthetase lenA (4650 aa).

Positions 227 to 628 (GSILDTIRAK…DGSVIHVGRK (402 aa)) are adenylation 1. In terms of domain architecture, Carrier 1 spans 773–849 (PPETVLEKAL…KLAQYLRNTE (77 aa)). S810 is subject to O-(pantetheine 4'-phosphoryl)serine. The interval 890-1212 (EDCYPCTALQ…CDFQSQLIFQ (323 aa)) is condensation 1. The adenylation 2 stretch occupies residues 1288-1622 (ELELNAQKEP…RKIRPGYLGR (335 aa)). In terms of domain architecture, Carrier 2 spans 1745–1822 (PPVSAAEKKW…EIAALSETRD (78 aa)). An O-(pantetheine 4'-phosphoryl)serine modification is found at S1782. Residues 1850–2110 (ATNLIAATVH…GEKTRPGGGA (261 aa)) are condensation 2. An adenylation 3 region spans residues 2183–2511 (RCVHDLVHDA…RTGDLIKLRG (329 aa)). The Carrier 3 domain occupies 2630–2708 (APQNRLQHDI…EADVGLDHAS (79 aa)). An O-(pantetheine 4'-phosphoryl)serine modification is found at S2667. Residues 2722–2998 (ESMARALAVI…KDARRRSPAN (277 aa)) form an epimerase region. A condensation 3 region spans residues 3128–3565 (VQDVYPCTPI…VDDSQRQQIL (438 aa)). Positions 3578–3980 (CVHHIIHQRC…FVGRKDNQIK (403 aa)) are adenylation 4. The region spanning 4114–4190 (TPSTPLEAQL…QLAAVLEEGA (77 aa)) is the Carrier 4 domain. The residue at position 4151 (S4151) is an O-(pantetheine 4'-phosphoryl)serine. The condensation 4 stretch occupies residues 4249–4648 (HMVLTFSQPV…TTTPEKLVAE (400 aa)).

Belongs to the NRP synthetase family. Pantetheine 4'-phosphate is required as a cofactor.

It participates in alkaloid biosynthesis. In terms of biological role, nonribosomal peptide synthetase; part of the gene cluster that mediates the biosynthesis of the ergot alkaloids lentopeptins A and B. Within the pathway, lenA catalyzes the biosynthesis of the Ala-Val-Ala peptide chain, including a cinnamic acid moiety as the starting unit. The release of the peptide from the enzyme is accomplished via a cyclization reaction catalyzed by the terminal condensation-like (Ct) domain of lenA to form the N-acyldiketopiperazine intermediate. The reaction appears to proceed through a nucleophilic attack on the carbonyl carbon by a lone electron pair of the valine amide nitrogen. The phenylalanine ammonia-lyase lenB provides the starter unit for the synthesis of the N-acyldiketopiperazine intermediate by the NRPS lenA, while the cytochrome P450 monooxygenase lenC is involved in the post-NRPS oxidative modification steps to form lentopeptins A and B. This Aspergillus lentulus protein is Nonribosomal peptide synthetase lenA.